A 335-amino-acid polypeptide reads, in one-letter code: MVKISVIGSGGWGIALAILLHKNGHNLTIWSFDKKEAEELKINRQNKTKLPNILLPEDIKVTDNLKEAVDNKDILVLAVPSKAIRSVSKSLKDIIKDNQIIVNVAKGLEEDTLKTMTDIIEEELKEKNPQVAVLSGPSHAEEVGKGIPTTCVVSAHNKELTLYLQNIFMNPSFRVYTSPDMIGVEIGGALKNVIALAAGIADGLNYGDNTKAALITRGIKEISSLGVAMGGEQSTFYGLTGLGDLIVTCASMHSRNRRAGILLGQGKTLDEAIKEVNMVVEGIYSAKSALMAAKKYNVEIPIIEQVNAVLFENKNAAEAVNELMIRDKKLEIQSW.

2 residues coordinate NADPH: Trp-12 and Lys-106. The sn-glycerol 3-phosphate site is built by Lys-106, Gly-136, and Ser-138. Residue Ala-140 participates in NADPH binding. The sn-glycerol 3-phosphate site is built by Lys-191, Asp-244, Ser-254, Arg-255, and Asn-256. Lys-191 serves as the catalytic Proton acceptor. NADPH is bound at residue Arg-255. Val-279 and Glu-281 together coordinate NADPH.

It belongs to the NAD-dependent glycerol-3-phosphate dehydrogenase family.

The protein resides in the cytoplasm. It carries out the reaction sn-glycerol 3-phosphate + NAD(+) = dihydroxyacetone phosphate + NADH + H(+). The catalysed reaction is sn-glycerol 3-phosphate + NADP(+) = dihydroxyacetone phosphate + NADPH + H(+). It participates in membrane lipid metabolism; glycerophospholipid metabolism. Functionally, catalyzes the reduction of the glycolytic intermediate dihydroxyacetone phosphate (DHAP) to sn-glycerol 3-phosphate (G3P), the key precursor for phospholipid synthesis. This chain is Glycerol-3-phosphate dehydrogenase [NAD(P)+], found in Fusobacterium nucleatum subsp. nucleatum (strain ATCC 25586 / DSM 15643 / BCRC 10681 / CIP 101130 / JCM 8532 / KCTC 2640 / LMG 13131 / VPI 4355).